The primary structure comprises 644 residues: Exoribonuclease 2 (644 aa).

In terms of domain architecture, RNB spans 189–516 (RQDLTALNFV…NHRLLKAVIK (328 aa)). Residues 561 to 643 (DTRFAAEIID…DTRSIIARPA (83 aa)) enclose the S1 motif domain.

Belongs to the RNR ribonuclease family. RNase II subfamily.

The protein resides in the cytoplasm. It carries out the reaction Exonucleolytic cleavage in the 3'- to 5'-direction to yield nucleoside 5'-phosphates.. Functionally, involved in mRNA degradation. Hydrolyzes single-stranded polyribonucleotides processively in the 3' to 5' direction. The chain is Exoribonuclease 2 from Salmonella arizonae (strain ATCC BAA-731 / CDC346-86 / RSK2980).